We begin with the raw amino-acid sequence, 515 residues long: Galactose-1-phosphate uridylyltransferase (515 aa).

Belongs to the galactose-1-phosphate uridylyltransferase type 2 family.

Its subcellular location is the cytoplasm. It catalyses the reaction alpha-D-galactose 1-phosphate + UDP-alpha-D-glucose = alpha-D-glucose 1-phosphate + UDP-alpha-D-galactose. Its pathway is carbohydrate metabolism; galactose metabolism. Functionally, transfers the UMP unit from UDP-glucose (UDP-Glc) to Gal1P. Can also transfer the UMP unit to GlcNAc1P and GalNAc1P. Involved in the general galactose metabolism, and also involved in the lacto-N-biose I/galacto-N-biose (LNB/GNB) degradation pathway, which is important for host intestinal colonization by bifidobacteria. This chain is Galactose-1-phosphate uridylyltransferase, found in Bifidobacterium longum subsp. longum (strain ATCC 15707 / DSM 20219 / JCM 1217 / NCTC 11818 / E194b).